Reading from the N-terminus, the 234-residue chain is Mitochondrial assembly of ribosomal large subunit protein 1 (234 aa).

The interval 63–88 is disordered; it reads SEPGLEERAEGTVNEGRPESDAADHT.

This sequence belongs to the Iojap/RsfS family. In terms of assembly, associates with the mitochondrial ribosome large subunit (39S) via interaction with MRPL12 and/or MRPL14. The interaction generates steric hindrance that is expected to prevent premature association of the 28S and 39S ribosomal subunits. Interacts with intermediates of the mitochondrial ribosome large subunit (mt-LSU) (recruits the mitochondrial ribosome and complex I assembly factor AltMIEF1 and NDUFAB1); regulates mitochondrial ribosomes assembly. Interacts with MRPL12 and MRPL14.

It is found in the mitochondrion matrix. In terms of biological role, required for normal mitochondrial ribosome function and mitochondrial translation. May play a role in ribosome biogenesis by preventing premature association of the 28S and 39S ribosomal subunits. Interacts with mitochondrial ribosomal protein uL14m (MRPL14), probably blocking formation of intersubunit bridge B8, preventing association of the 28S and 39S ribosomal subunits. Addition to isolated mitochondrial ribosomal subunits partially inhibits translation, probably by interfering with the association of the 28S and 39S ribosomal subunits and the formation of functional ribosomes. May also participate in the assembly and/or regulation of the stability of the large subunit of the mitochondrial ribosome. May function as a ribosomal silencing factor. The sequence is that of Mitochondrial assembly of ribosomal large subunit protein 1 (MALSU1) from Homo sapiens (Human).